The primary structure comprises 260 residues: Small ribosomal subunit protein uS2 (260 aa).

A disordered region spans residues 240 to 260 (VLKPKLPYQPNRRPYQETVKK).

It belongs to the universal ribosomal protein uS2 family.

This chain is Small ribosomal subunit protein uS2, found in Phytoplasma australiense.